The primary structure comprises 537 residues: DELLA protein GAI (537 aa).

The segment at 1–33 (MKRDHQEISGSGSNPAESSSIKGKLWEEDPDAG) is disordered. Residues 9–20 (SGSGSNPAESSS) show a composition bias toward low complexity. The short motif at 37-41 (DELLA) is the DELLA motif element. The interval 131–157 (KSDPGLEITRKRAKTESSSSSSSTTTR) is disordered. Positions 147 to 156 (SSSSSSSTTT) are enriched in low complexity. One can recognise a GRAS domain in the interval 162–533 (IDSQEAGVRL…RPLIAHLGLA (372 aa)). Residues 169 to 223 (VRLVHTLMACAEAVQQDNLKLADALVKHIGLLASSQTGAMRKVATYFAEALARRI) form a leucine repeat I (LRI) region. The tract at residues 241–306 (QIPFYETCPY…GGPPAFRLTG (66 aa)) is VHIID. The short motif at 272-276 (VHVID) is the VHIID element. A leucine repeat II (LRII) region spans residues 320–352 (QVGWKLAQLAERIGIEFEFRGFVANSLADLEPE). A PFYRE region spans residues 364–454 (VAVNAVFELH…ELYLGRQICN (91 aa)). Positions 372–376 (LHPLL) match the LXXLL motif motif. The segment at 457–533 (ACEGMDRVER…RPLIAHLGLA (77 aa)) is SAW.

Belongs to the GRAS family. DELLA subfamily. Phosphorylated. In terms of processing, ubiquitinated. Upon GA application it is ubiquitinated, leading to its subsequent degradation.

It localises to the nucleus. Functionally, probable transcriptional regulator that acts as a repressor of the gibberellin (GA) signaling pathway. Probably acts by participating in large multiprotein complexes that represses transcription of GA-inducible genes. Upon GA application, it is degraded by the proteasome, allowing the GA signaling pathway. The protein is DELLA protein GAI (GAI) of Gossypium hirsutum (Upland cotton).